The chain runs to 1383 residues: DNA-directed RNA polymerase subunit beta (1383 aa).

This sequence belongs to the RNA polymerase beta chain family. The RNAP catalytic core consists of 2 alpha, 1 beta, 1 beta' and 1 omega subunit. When a sigma factor is associated with the core the holoenzyme is formed, which can initiate transcription.

The enzyme catalyses RNA(n) + a ribonucleoside 5'-triphosphate = RNA(n+1) + diphosphate. Its function is as follows. DNA-dependent RNA polymerase catalyzes the transcription of DNA into RNA using the four ribonucleoside triphosphates as substrates. The chain is DNA-directed RNA polymerase subunit beta from Bartonella henselae (strain ATCC 49882 / DSM 28221 / CCUG 30454 / Houston 1) (Rochalimaea henselae).